The sequence spans 486 residues: Coronin-1B (486 aa).

At Ser-2 the chain carries Phosphoserine; by PKC. WD repeat units lie at residues 80–120 (GHTG…LTSP), 130–170 (GHTK…ELYR), 174–213 (LHPD…LVAE), 217–260 (AHEG…EPMA), and 265–305 (DSSN…PYIH). Residues 404 to 444 (LKVSRRNVLSDSRPTSAARPAAPAPAAPAPAAAASSSLSGA) are disordered. The segment covering 432–444 (APAAAASSSLSGA) has biased composition (low complexity). The stretch at 446 to 484 (EAGKLEEVMRELRALRALVKEQGERIGRLEEQLGRVENG) forms a coiled coil.

It belongs to the WD repeat coronin family. Forms homooligomers, but does not form complexes with the other coronins. Interacts with Arp2/3 complex components, including ACTR2, ARPC1B and ARPC2. Binds actin. In terms of processing, phosphorylated in vivo by PKC in response to cholinergic stimulation. Phosphorylation on Ser-2 regulates the interaction with the Arp2/3 complex and cell motility in fibroblasts. Phosphorylation does not seem to affect subcellular location.

The protein resides in the cytoplasm. It is found in the cytoskeleton. It localises to the stress fiber. Its function is as follows. Regulates leading edge dynamics and cell motility in fibroblasts. May be involved in cytokinesis and signal transduction. In Oryctolagus cuniculus (Rabbit), this protein is Coronin-1B (CORO1B).